The sequence spans 1018 residues: 2-oxoglutarate dehydrogenase-like, mitochondrial (1018 aa).

Residues H138, D151, and D153 each coordinate Ca(2+). Thiamine diphosphate contacts are provided by R307, D406, N439, I441, and Q671. Mg(2+)-binding residues include D406, N439, and I441.

Belongs to the alpha-ketoglutarate dehydrogenase family. The OGDHC complex comprises multiple copies of three catalytic enzyme components, the 2-oxoglutarate dehydrogenase (OGDH/E1), the dihydrolipoamide dehydrogenase (DLST/E2) and the dihydrolipoamide dehydrogenase (DLD/E3). OGDHL/E1-like isoenzyme may replace OGDH in the OGDHC complex in the brain. Thiamine diphosphate is required as a cofactor. Mg(2+) serves as cofactor.

The protein localises to the mitochondrion matrix. The catalysed reaction is N(6)-[(R)-lipoyl]-L-lysyl-[protein] + 2-oxoglutarate + H(+) = N(6)-[(R)-S(8)-succinyldihydrolipoyl]-L-lysyl-[protein] + CO2. 2-oxoglutarate dehydrogenase (E1-like) component of the 2-oxoglutarate dehydrogenase multienzyme complex (OGDHC) which mediates the decarboxylation of alpha-ketoglutarate in the tricarboxylic acid cycle. The OGDHC complex catalyzes the overall conversion of 2-oxoglutarate to succinyl-CoA and CO(2) while reducing NAD(+) to NADH. The OGDHC complex is mainly active in the mitochondrion. Involved in the inhibition of cell proliferation and in apoptosis. The chain is 2-oxoglutarate dehydrogenase-like, mitochondrial (ogdhl) from Xenopus laevis (African clawed frog).